We begin with the raw amino-acid sequence, 291 residues long: Protease HtpX (291 aa).

2 helical membrane-spanning segments follow: residues 4–24 (IVIF…LLTC) and 37–57 (IISG…SKFI). His139 contributes to the Zn(2+) binding site. Glu140 is a catalytic residue. His143 contributes to the Zn(2+) binding site. A run of 2 helical transmembrane segments spans residues 147 to 167 (GDMV…IFIS) and 195 to 215 (IVST…VLWF). Residue Glu220 participates in Zn(2+) binding.

Belongs to the peptidase M48B family. It depends on Zn(2+) as a cofactor.

The protein localises to the cell membrane. The polypeptide is Protease HtpX (Baumannia cicadellinicola subsp. Homalodisca coagulata).